The following is a 73-amino-acid chain: Salivary protein FS48 (73 aa).

Positions 1 to 21 (MKFAFAIFVVLAILHTELISA) are cleaved as a signal peptide.

Its subcellular location is the secreted. Its function is as follows. Salivary protein that inhibits host voltage-gated potassium channels Kv1.1/KCNA1, Kv1.2/KCNA2 and Kv1.3/KCNA3 likely via a voltage-independent pore-blocking mechanism. Suppresses expression of the Kv1.3/KCNA3 channel in lipopolysaccharide (LPS)-stimulated mouse macrophages and human T-cells. Down-regulates secretion of nitric oxide (NO) and inflammatory cytokines, such as TNF-alpha/TNF, IL-1beta/IL1B and IL6, in LPS-stimulated mouse macrophages in a manner dependent on Kv1.3/KCNA3 channel blockage. Reduces activation of MAPK and NF-kappa-B signaling pathways in LPS-stimulated mouse macrophages. Modulates intracellular Ca(2+) signaling in human PMA/ionomycin-triggered T-cells. Interferes with the activation of the MAPK, NF-kappa-B and NFATc1 pathways in human PMA/ionomycin-triggered T-cells. Reduces proliferation of human PMA/ionomycin-triggered T-cells. Down-regulates secretion of cytokines, such as TNF-alpha/TNF and IL2, in human PMA/ionomycin-triggered T-cells. The chain is Salivary protein FS48 from Xenopsylla cheopis (Oriental rat flea).